The following is a 395-amino-acid chain: Allantoicase (395 aa).

The protein belongs to the allantoicase family.

The catalysed reaction is allantoate + H2O = (S)-ureidoglycolate + urea. It functions in the pathway nitrogen metabolism; (S)-allantoin degradation; (S)-ureidoglycolate from allantoate (aminidohydrolase route): step 1/1. Its function is as follows. Utilization of purines as secondary nitrogen sources, when primary sources are limiting. This Danio rerio (Zebrafish) protein is Allantoicase (allc).